A 200-amino-acid chain; its full sequence is NADH-quinone oxidoreductase subunit C (200 aa).

Belongs to the complex I 30 kDa subunit family. As to quaternary structure, NDH-1 is composed of 14 different subunits. Subunits NuoB, C, D, E, F, and G constitute the peripheral sector of the complex.

The protein localises to the cell inner membrane. It carries out the reaction a quinone + NADH + 5 H(+)(in) = a quinol + NAD(+) + 4 H(+)(out). In terms of biological role, NDH-1 shuttles electrons from NADH, via FMN and iron-sulfur (Fe-S) centers, to quinones in the respiratory chain. The immediate electron acceptor for the enzyme in this species is believed to be ubiquinone. Couples the redox reaction to proton translocation (for every two electrons transferred, four hydrogen ions are translocated across the cytoplasmic membrane), and thus conserves the redox energy in a proton gradient. The chain is NADH-quinone oxidoreductase subunit C from Burkholderia vietnamiensis (strain G4 / LMG 22486) (Burkholderia cepacia (strain R1808)).